The following is a 473-amino-acid chain: Vasculin (473 aa).

5 disordered regions span residues 1–26, 44–163, 196–240, 258–286, and 305–342; these read MAQH…SLNF, RRRH…EYPP, SQPV…SFPH, NFSP…QQPR, and LKRD…QERD. The residue at position 49 (serine 49) is a Phosphoserine. Arginine 87 bears the Omega-N-methylarginine mark. Residues 93 to 107 are compositionally biased toward low complexity; sequence GSSRSRSSIFHSGKS. Positions 119–133 are enriched in basic and acidic residues; it reads ETGRKDDKRERKQFE. A phosphoserine mark is found at serine 274, serine 276, serine 322, and serine 381. Residues 305 to 329 show a composition bias toward basic and acidic residues; the sequence is LKRDRVEEEHEDESHVGSEKDDDSF. Positions 444 to 473 are disordered; the sequence is GPWKNSTFKPTIENDDTETSSSDTSDDDDV. Positions 456-473 are enriched in acidic residues; it reads ENDDTETSSSDTSDDDDV.

The protein belongs to the vasculin family. Interacts with GTF2B, GTF2F2, RNA polymerase II and TBP.

Its subcellular location is the nucleus. Its function is as follows. Functions as a GC-rich promoter-specific transactivating transcription factor. The protein is Vasculin (GPBP1) of Bos taurus (Bovine).